The chain runs to 20 residues: GSLGEKYAQKAAEVLTSIIP.

In terms of tissue distribution, expressed by the venom gland.

The protein resides in the secreted. The protein is Venom peptide Ocy8 of Opisthacanthus cayaporum (South American scorpion).